Reading from the N-terminus, the 364-residue chain is GTPase Obg (364 aa).

One can recognise an Obg domain in the interval 1-159 (MKFIDEARIE…RNLRLELKVL (159 aa)). The disordered stretch occupies residues 128-147 (IHFKSSTNRAPRQKTDGKAG). Residues 160–334 (ADVGLLGMPN…LVHAIQEYLD (175 aa)) enclose the OBG-type G domain. Residues 166-173 (GMPNAGKS), 191-195 (FTTLH), 213-216 (DIPG), 284-287 (NKLD), and 315-317 (SAL) each bind GTP. Ser173 and Thr193 together coordinate Mg(2+). The interval 340–364 (EDAAAAAPDQRLDPTLHNVDHDDQA) is disordered. Residues 349 to 364 (QRLDPTLHNVDHDDQA) are compositionally biased toward basic and acidic residues.

The protein belongs to the TRAFAC class OBG-HflX-like GTPase superfamily. OBG GTPase family. As to quaternary structure, monomer. Mg(2+) serves as cofactor.

It is found in the cytoplasm. Its function is as follows. An essential GTPase which binds GTP, GDP and possibly (p)ppGpp with moderate affinity, with high nucleotide exchange rates and a fairly low GTP hydrolysis rate. Plays a role in control of the cell cycle, stress response, ribosome biogenesis and in those bacteria that undergo differentiation, in morphogenesis control. The sequence is that of GTPase Obg from Ralstonia pickettii (strain 12J).